Reading from the N-terminus, the 74-residue chain is ATP synthase subunit c (74 aa).

2 helical membrane-spanning segments follow: residues Ile-9–Phe-29 and Phe-54–Val-74.

Belongs to the ATPase C chain family. As to quaternary structure, F-type ATPases have 2 components, F(1) - the catalytic core - and F(0) - the membrane proton channel. F(1) has five subunits: alpha(3), beta(3), gamma(1), delta(1), epsilon(1). F(0) has three main subunits: a(1), b(2) and c(10-14). The alpha and beta chains form an alternating ring which encloses part of the gamma chain. F(1) is attached to F(0) by a central stalk formed by the gamma and epsilon chains, while a peripheral stalk is formed by the delta and b chains.

Its subcellular location is the cell inner membrane. F(1)F(0) ATP synthase produces ATP from ADP in the presence of a proton or sodium gradient. F-type ATPases consist of two structural domains, F(1) containing the extramembraneous catalytic core and F(0) containing the membrane proton channel, linked together by a central stalk and a peripheral stalk. During catalysis, ATP synthesis in the catalytic domain of F(1) is coupled via a rotary mechanism of the central stalk subunits to proton translocation. Its function is as follows. Key component of the F(0) channel; it plays a direct role in translocation across the membrane. A homomeric c-ring of between 10-14 subunits forms the central stalk rotor element with the F(1) delta and epsilon subunits. The chain is ATP synthase subunit c from Gluconacetobacter diazotrophicus (strain ATCC 49037 / DSM 5601 / CCUG 37298 / CIP 103539 / LMG 7603 / PAl5).